A 266-amino-acid chain; its full sequence is tRNA dimethylallyltransferase (266 aa).

This sequence belongs to the IPP transferase family. As to quaternary structure, monomer. Requires Mg(2+) as cofactor.

It carries out the reaction adenosine(37) in tRNA + dimethylallyl diphosphate = N(6)-dimethylallyladenosine(37) in tRNA + diphosphate. Its function is as follows. Catalyzes the transfer of a dimethylallyl group onto the adenine at position 37 in tRNAs that read codons beginning with uridine, leading to the formation of N6-(dimethylallyl)adenosine (i(6)A). The polypeptide is tRNA dimethylallyltransferase (miaA) (Helicobacter acinonychis (strain Sheeba)).